The sequence spans 972 residues: Isoleucine--tRNA ligase (972 aa).

Positions 63–73 (PYANGNIHIGH) match the 'HIGH' region motif. E603 lines the L-isoleucyl-5'-AMP pocket. The 'KMSKS' region motif lies at 644–648 (KMSKS). K647 lines the ATP pocket.

The protein belongs to the class-I aminoacyl-tRNA synthetase family. IleS type 1 subfamily. Monomer.

Its subcellular location is the cytoplasm. It catalyses the reaction tRNA(Ile) + L-isoleucine + ATP = L-isoleucyl-tRNA(Ile) + AMP + diphosphate. Catalyzes the attachment of isoleucine to tRNA(Ile). As IleRS can inadvertently accommodate and process structurally similar amino acids such as valine, to avoid such errors it has two additional distinct tRNA(Ile)-dependent editing activities. One activity is designated as 'pretransfer' editing and involves the hydrolysis of activated Val-AMP. The other activity is designated 'posttransfer' editing and involves deacylation of mischarged Val-tRNA(Ile). The sequence is that of Isoleucine--tRNA ligase from Brucella melitensis biotype 1 (strain ATCC 23456 / CCUG 17765 / NCTC 10094 / 16M).